We begin with the raw amino-acid sequence, 1020 residues long: LLGL scribble cell polarity complex component 2 (1020 aa).

WD repeat units lie at residues 36 to 69, 76 to 117, 132 to 169, 193 to 227, 233 to 264, 282 to 324, 332 to 364, 386 to 462, 506 to 581, 590 to 651, 710 to 766, 775 to 827, 832 to 884, and 898 to 921; these read SALGFSPSLELLAIGTRSGAIKLYGAPGVEFMGL, VTQV…IGRF, VTAVLAHSSGELLLLGTEGGHVFVVEVPGFRELEENNI, TLHENPLNPRQVLIGYSRGLMVLWDLDRQRPVQHF, LESVWWMEDGESILSSHSDGSYCQWTVTGEDP, AISK…KTHE, IIDFFVIREGENHKGEPSALVVLVEEELVVVDL, TCSH…YKLS, QKIH…FALV, TAIA…LRQS, VRTL…KEIQ, GLVV…VSSK, LTAV…VHYP, and VFTKYGQGFYLISPSEFERFSLST. A disordered region spans residues 935–968; the sequence is LQMRSKSPSSPVHRDLPDGVPTEHRNFKGDSEGY. The segment covering 946-965 has biased composition (basic and acidic residues); sequence VHRDLPDGVPTEHRNFKGDS.

This sequence belongs to the WD repeat L(2)GL family. Phosphorylated.

It is found in the cytoplasm. The protein resides in the cytoskeleton. Essential for hemidesmosome formation and maintenance of the cytoskeleton elements as well as cellular morphology in the basal epidermis during development. Also involved in regulating growth of the basal epidermis. In Danio rerio (Zebrafish), this protein is LLGL scribble cell polarity complex component 2 (llgl2).